A 335-amino-acid polypeptide reads, in one-letter code: MNQFYKRHFLRLLDFTPAEIIALLDLATELKKDKKSGCEQQKLVGKNIALIFEKDSTRTRCSFEVAAYDQGARVTYLGPGGSQIGHKESIKDTARVLGRMYDGIQYRGYGQRVVETLAEFAGVPVWNGLTDEFHPTQLLADLLTMREHLPNKSLNKMTLAYLGDTRNNMGNSLLEAAALVGMDLRLVAPKACWPEEAFVISCQALAQKTGGKITLTEDIAEGVNGADFLYTDVWVSMGEPKEVWQERINLLKPYQVNMRVLTLTGNPQVKFLHCLPAFHDDQTTIGKQMAEQYDLPGGMEVTEEVFESAHSIVFDQAENRLHTIKAVMVATMSKI.

Carbamoyl phosphate is bound by residues 56–59, Gln83, Arg107, and 134–137; these read STRT and HPTQ. L-ornithine-binding positions include Asn168, Asp232, and 236–237; that span reads SM. Residues 274-275 and Arg320 contribute to the carbamoyl phosphate site; that span reads CL.

Belongs to the aspartate/ornithine carbamoyltransferase superfamily. OTCase family.

Its subcellular location is the cytoplasm. It catalyses the reaction carbamoyl phosphate + L-ornithine = L-citrulline + phosphate + H(+). The protein operates within amino-acid biosynthesis; L-arginine biosynthesis; L-arginine from L-ornithine and carbamoyl phosphate: step 1/3. Functionally, reversibly catalyzes the transfer of the carbamoyl group from carbamoyl phosphate (CP) to the N(epsilon) atom of ornithine (ORN) to produce L-citrulline. The polypeptide is Ornithine carbamoyltransferase (Yersinia pestis bv. Antiqua (strain Nepal516)).